Consider the following 489-residue polypeptide: Type II restriction enzyme Sau3AI (489 aa).

Mg(2+) is required as a cofactor.

It carries out the reaction Endonucleolytic cleavage of DNA to give specific double-stranded fragments with terminal 5'-phosphates.. In terms of biological role, an E and P subtype restriction enzyme that recognizes the double-stranded sequence 5'-GATC-3' and cleaves before G-1. In Staphylococcus aureus, this protein is Type II restriction enzyme Sau3AI (sau3AIR).